Consider the following 423-residue polypeptide: Putative competence-damage inducible protein (423 aa).

This sequence belongs to the CinA family.

This is Putative competence-damage inducible protein from Streptococcus pyogenes serotype M6 (strain ATCC BAA-946 / MGAS10394).